The following is a 337-amino-acid chain: MIEADRLIHPQIIDREEAEAVDRAMRPKMLDEYTGQDDTRAQLKIFIEAAQKRGEALDHMLIYGPPGLGKTTLAMIVANEMGVNIKSTSGPVLEKAGDLAALLTNLEPNDVLFIDEIHRLSPVVEEILYPAMEDYQLDIMIGEGPAARSIKLDLPPFTLVGATTRAGALTSPLRARFGIPLRLEFYNVKDLSSIVARSAKVMALEIDDEGAVEIARRSRGTPRIANRLLRRVRDFAEVKHSGDVTKVIAEAALDMLDVDAEGFDYMDRKLLLAIIDKFMGGPVGLDNLAAAIGEERETIEDVLEPFLIQQGFIQRTPRGRIATPRAYNHFNIIKPDA.

The large ATPase domain (RuvB-L) stretch occupies residues 4–186; it reads ADRLIHPQII…FGIPLRLEFY (183 aa). ATP is bound by residues R26, G67, K70, T71, T72, 133–135, R176, Y186, and R223; that span reads EDY. T71 contacts Mg(2+). The small ATPAse domain (RuvB-S) stretch occupies residues 187-257; the sequence is NVKDLSSIVA…IAEAALDMLD (71 aa). A head domain (RuvB-H) region spans residues 260 to 337; it reads AEGFDYMDRK…NHFNIIKPDA (78 aa). The DNA site is built by R296, R315, and R320.

The protein belongs to the RuvB family. Homohexamer. Forms an RuvA(8)-RuvB(12)-Holliday junction (HJ) complex. HJ DNA is sandwiched between 2 RuvA tetramers; dsDNA enters through RuvA and exits via RuvB. An RuvB hexamer assembles on each DNA strand where it exits the tetramer. Each RuvB hexamer is contacted by two RuvA subunits (via domain III) on 2 adjacent RuvB subunits; this complex drives branch migration. In the full resolvosome a probable DNA-RuvA(4)-RuvB(12)-RuvC(2) complex forms which resolves the HJ.

The protein resides in the cytoplasm. The catalysed reaction is ATP + H2O = ADP + phosphate + H(+). Functionally, the RuvA-RuvB-RuvC complex processes Holliday junction (HJ) DNA during genetic recombination and DNA repair, while the RuvA-RuvB complex plays an important role in the rescue of blocked DNA replication forks via replication fork reversal (RFR). RuvA specifically binds to HJ cruciform DNA, conferring on it an open structure. The RuvB hexamer acts as an ATP-dependent pump, pulling dsDNA into and through the RuvAB complex. RuvB forms 2 homohexamers on either side of HJ DNA bound by 1 or 2 RuvA tetramers; 4 subunits per hexamer contact DNA at a time. Coordinated motions by a converter formed by DNA-disengaged RuvB subunits stimulates ATP hydrolysis and nucleotide exchange. Immobilization of the converter enables RuvB to convert the ATP-contained energy into a lever motion, pulling 2 nucleotides of DNA out of the RuvA tetramer per ATP hydrolyzed, thus driving DNA branch migration. The RuvB motors rotate together with the DNA substrate, which together with the progressing nucleotide cycle form the mechanistic basis for DNA recombination by continuous HJ branch migration. Branch migration allows RuvC to scan DNA until it finds its consensus sequence, where it cleaves and resolves cruciform DNA. The polypeptide is Holliday junction branch migration complex subunit RuvB (Shewanella halifaxensis (strain HAW-EB4)).